Consider the following 591-residue polypeptide: Fidgetin-like protein 1 (591 aa).

2 disordered regions span residues 1-117 and 223-249; these read MYSP…KSSL and GQEP…SQPI. Residues 17 to 26 are compositionally biased toward basic and acidic residues; that stretch reads KRPETEENRG. Acidic residues predominate over residues 76–93; it reads DDDPESIVIDEDDEEDEP. Positions 237–249 are enriched in polar residues; sequence RQSSSQSNHSQPI. Residues alanine 319 and 359–364 contribute to the ATP site; that span reads GTGKTM.

The protein belongs to the AAA ATPase family. In terms of assembly, hexamer. The cofactor is Mg(2+).

Its subcellular location is the nucleus. The catalysed reaction is ATP + H2O = ADP + phosphate + H(+). Has a role in spindle assembly which acts in the progression through mitosis during embryogenesis. Required for fertility. The polypeptide is Fidgetin-like protein 1 (figl-1) (Caenorhabditis briggsae).